Here is a 448-residue protein sequence, read N- to C-terminus: Beta-glucosidase A (448 aa).

Glu166 functions as the Proton donor in the catalytic mechanism. The active-site Nucleophile is Glu352.

Belongs to the glycosyl hydrolase 1 family. As to quaternary structure, homooctamer.

It carries out the reaction Hydrolysis of terminal, non-reducing beta-D-glucosyl residues with release of beta-D-glucose.. Functionally, bglA is intracellular and cleaves cellobiose probably through inorganic phosphate mediated hydrolysis. This is Beta-glucosidase A (bglA) from Paenibacillus polymyxa (Bacillus polymyxa).